The chain runs to 230 residues: 2-C-methyl-D-erythritol 4-phosphate cytidylyltransferase (230 aa).

The protein belongs to the IspD/TarI cytidylyltransferase family. IspD subfamily.

The catalysed reaction is 2-C-methyl-D-erythritol 4-phosphate + CTP + H(+) = 4-CDP-2-C-methyl-D-erythritol + diphosphate. Its pathway is isoprenoid biosynthesis; isopentenyl diphosphate biosynthesis via DXP pathway; isopentenyl diphosphate from 1-deoxy-D-xylulose 5-phosphate: step 2/6. Functionally, catalyzes the formation of 4-diphosphocytidyl-2-C-methyl-D-erythritol from CTP and 2-C-methyl-D-erythritol 4-phosphate (MEP). In Shewanella halifaxensis (strain HAW-EB4), this protein is 2-C-methyl-D-erythritol 4-phosphate cytidylyltransferase.